The primary structure comprises 185 residues: Small ribosomal subunit protein uS5 (185 aa).

The region spanning 18–81 (FVDKLVHINR…ESAKRALIRV (64 aa)) is the S5 DRBM domain. The tract at residues 157-185 (SPRSVAARRGIKVSQLQSRRRVEDAEATD) is disordered. The segment covering 176–185 (RRVEDAEATD) has biased composition (basic and acidic residues).

It belongs to the universal ribosomal protein uS5 family. Part of the 30S ribosomal subunit. Contacts proteins S4 and S8.

Functionally, with S4 and S12 plays an important role in translational accuracy. In terms of biological role, located at the back of the 30S subunit body where it stabilizes the conformation of the head with respect to the body. This chain is Small ribosomal subunit protein uS5, found in Xanthobacter autotrophicus (strain ATCC BAA-1158 / Py2).